Reading from the N-terminus, the 85-residue chain is Beta-insect depressant toxin BmKITa (85 aa).

A signal peptide spans 1–21; that stretch reads MKLFLLLLISASMLIDGLVNA. One can recognise an LCN-type CS-alpha/beta domain in the interval 22-82; that stretch reads DGYIRGSNGC…TWKSESNTCG (61 aa). Intrachain disulfides connect C31-C81, C35-C56, C42-C63, and C46-C65. G82 is subject to Glycine amide.

Expressed by the venom gland.

The protein localises to the secreted. Its function is as follows. Depressant insect beta-toxins cause a transient contraction paralysis followed by a slow flaccid paralysis. They bind voltage-independently at site-4 of sodium channels (Nav) and shift the voltage of activation toward more negative potentials thereby affecting sodium channel activation and promoting spontaneous and repetitive firing. This toxin also displays an evident analgesic effect but is devoid of any toxicity on mice. The polypeptide is Beta-insect depressant toxin BmKITa (Olivierus martensii (Manchurian scorpion)).